The primary structure comprises 244 residues: uncharacterized protein (244 aa).

The WGR domain maps to 1-78 (MKKRFIYHDE…PKFNFMDRYY (78 aa)).

This is an uncharacterized protein from Escherichia coli (strain K12).